A 583-amino-acid polypeptide reads, in one-letter code: Aspartate--tRNA ligase (583 aa).

Glutamate 169 contacts L-aspartate. The interval 193-196 (QLFK) is aspartate. L-aspartate is bound at residue arginine 215. Residues 215-217 (RDE) and glutamine 224 each bind ATP. An L-aspartate-binding site is contributed by histidine 443. Position 477 (glutamate 477) interacts with ATP. Arginine 484 serves as a coordination point for L-aspartate. 529 to 532 (GIDR) lines the ATP pocket.

This sequence belongs to the class-II aminoacyl-tRNA synthetase family. Type 1 subfamily. In terms of assembly, homodimer.

Its subcellular location is the cytoplasm. It catalyses the reaction tRNA(Asp) + L-aspartate + ATP = L-aspartyl-tRNA(Asp) + AMP + diphosphate. Its function is as follows. Catalyzes the attachment of L-aspartate to tRNA(Asp) in a two-step reaction: L-aspartate is first activated by ATP to form Asp-AMP and then transferred to the acceptor end of tRNA(Asp). The protein is Aspartate--tRNA ligase of Stenotrophomonas maltophilia (strain R551-3).